The chain runs to 252 residues: Auxin-induced in root cultures protein 12 (252 aa).

An N-terminal signal peptide occupies residues 1 to 25; that stretch reads MASSSSSLLILAVACFVSLISPAIS. The DOMON domain occupies 49–165; that stretch reads LNSYLHYTYN…DSVNQVWQIG (117 aa). 2 N-linked (GlcNAc...) asparagine glycosylation sites follow: N58 and N61. Residue M91 coordinates heme. Residues N114 and N167 are each glycosylated (N-linked (GlcNAc...) asparagine). H176 lines the heme pocket. Residues 193–224 form a disordered region; that stretch reads EDAAPGSAPSPGSAPAPGTSGSTTPGTAAGGP. Residues 195 to 219 are compositionally biased toward low complexity; sequence AAPGSAPSPGSAPAPGTSGSTTPGT. N226 is lipidated: GPI-anchor amidated asparagine. A propeptide spans 227-252 (removed in mature form); it reads AGSLTRNVNFGVNLGILVLLGSIFIF.

Heme is required as a cofactor.

The protein resides in the cell membrane. In terms of biological role, one-heme-containing cytochrome. The polypeptide is Auxin-induced in root cultures protein 12 (AIR12) (Arabidopsis thaliana (Mouse-ear cress)).